Here is a 105-residue protein sequence, read N- to C-terminus: Phosphoribosyl-AMP cyclohydrolase (105 aa).

D72 contacts Mg(2+). C73 serves as a coordination point for Zn(2+). Mg(2+) contacts are provided by D74 and D76. 2 residues coordinate Zn(2+): C89 and C96.

It belongs to the PRA-CH family. As to quaternary structure, homodimer. It depends on Mg(2+) as a cofactor. Requires Zn(2+) as cofactor.

It is found in the cytoplasm. The catalysed reaction is 1-(5-phospho-beta-D-ribosyl)-5'-AMP + H2O = 1-(5-phospho-beta-D-ribosyl)-5-[(5-phospho-beta-D-ribosylamino)methylideneamino]imidazole-4-carboxamide. It participates in amino-acid biosynthesis; L-histidine biosynthesis; L-histidine from 5-phospho-alpha-D-ribose 1-diphosphate: step 3/9. In terms of biological role, catalyzes the hydrolysis of the adenine ring of phosphoribosyl-AMP. The polypeptide is Phosphoribosyl-AMP cyclohydrolase (Listeria innocua serovar 6a (strain ATCC BAA-680 / CLIP 11262)).